The sequence spans 428 residues: Putative zinc metalloprotease SA1105 (428 aa).

His-21 lines the Zn(2+) pocket. Residue Glu-22 is part of the active site. His-25 contributes to the Zn(2+) binding site. The next 4 membrane-spanning stretches (helical) occupy residues 172–194 (FLTL…IGLA), 309–331 (GSTL…GFSF), 352–374 (IISL…LIPI), and 401–420 (TTII…LVTW). In terms of domain architecture, PDZ spans 186–269 (ALVLFIGLAY…TKSVELTPKK (84 aa)).

It belongs to the peptidase M50B family. The cofactor is Zn(2+).

It localises to the cell membrane. This Staphylococcus aureus (strain N315) protein is Putative zinc metalloprotease SA1105.